The chain runs to 236 residues: Ribose-5-phosphate isomerase A (236 aa).

Substrate contacts are provided by residues 28 to 31 (TGST), 83 to 86 (DGAD), and 96 to 99 (KGGG). The Proton acceptor role is filled by glutamate 105. Lysine 123 is a binding site for substrate.

The protein belongs to the ribose 5-phosphate isomerase family. As to quaternary structure, homodimer.

The catalysed reaction is aldehydo-D-ribose 5-phosphate = D-ribulose 5-phosphate. The protein operates within carbohydrate degradation; pentose phosphate pathway; D-ribose 5-phosphate from D-ribulose 5-phosphate (non-oxidative stage): step 1/1. Its function is as follows. Catalyzes the reversible conversion of ribose-5-phosphate to ribulose 5-phosphate. The polypeptide is Ribose-5-phosphate isomerase A (Afipia carboxidovorans (strain ATCC 49405 / DSM 1227 / KCTC 32145 / OM5) (Oligotropha carboxidovorans)).